We begin with the raw amino-acid sequence, 76 residues long: MGSFSIWHWLIVLVIVMLVFGTKKLRNIGQDLGGAVKGFKDGMKDGEDKGAQPAASKELRDSTTIDVDAKEKSRQQ.

The chain crosses the membrane as a helical span at residues 1–21; that stretch reads MGSFSIWHWLIVLVIVMLVFG. 2 stretches are compositionally biased toward basic and acidic residues: residues 41 to 50 and 57 to 76; these read DGMKDGEDKG and KELRDSTTIDVDAKEKSRQQ. Residues 41 to 76 form a disordered region; that stretch reads DGMKDGEDKGAQPAASKELRDSTTIDVDAKEKSRQQ.

The protein belongs to the TatA/E family. The Tat system comprises two distinct complexes: a TatABC complex, containing multiple copies of TatA, TatB and TatC subunits, and a separate TatA complex, containing only TatA subunits. Substrates initially bind to the TatABC complex, which probably triggers association of the separate TatA complex to form the active translocon.

Its subcellular location is the cell inner membrane. Its function is as follows. Part of the twin-arginine translocation (Tat) system that transports large folded proteins containing a characteristic twin-arginine motif in their signal peptide across membranes. TatA could form the protein-conducting channel of the Tat system. This chain is Sec-independent protein translocase protein TatA, found in Cupriavidus taiwanensis (strain DSM 17343 / BCRC 17206 / CCUG 44338 / CIP 107171 / LMG 19424 / R1) (Ralstonia taiwanensis (strain LMG 19424)).